A 100-amino-acid chain; its full sequence is Class II hydrophobin 4 (100 aa).

The signal sequence occupies residues 1-17 (MQFYAIASLFLAGTAFA). 4 disulfides stabilise this stretch: cysteine 29/cysteine 79, cysteine 40/cysteine 70, cysteine 41/cysteine 53, and cysteine 80/cysteine 92.

This sequence belongs to the cerato-ulmin hydrophobin family.

It is found in the secreted. It localises to the cell wall. Functionally, aerial growth, conidiation, and dispersal of filamentous fungi in the environment rely upon a capability of their secreting small amphipathic proteins called hydrophobins (HPBs) with low sequence identity. Class I can self-assemble into an outermost layer of rodlet bundles on aerial cell surfaces, conferring cellular hydrophobicity that supports fungal growth, development and dispersal; whereas Class II form highly ordered films at water-air interfaces through intermolecular interactions but contribute nothing to the rodlet structure. Does not seem to be important for the ability to cause seedling disease. The chain is Class II hydrophobin 4 from Gibberella moniliformis (Maize ear and stalk rot fungus).